The chain runs to 359 residues: Putative cyclin-F1-2 (359 aa).

Belongs to the cyclin family. Cyclin F subfamily.

The polypeptide is Putative cyclin-F1-2 (CYCF1-2) (Oryza sativa subsp. japonica (Rice)).